The following is a 2167-amino-acid chain: MVIVTRGDYIWIEPASGREFDVAIGARVVSAEGRRIQVRDDDGDEVWLAPERRIKAMHASSVQGVEDMISLGDLHEAGILRNLLIRYKENLIYTYTGSILVAVNPYQILPIYTGDQIKLYKERKIGELPPHIFAIGDNAYAHMKRYRQDQCIVISGESGAGKTESTKLILQYLAAISGKHSWIEQQILEANPILEAFGNAKTIRNDNSSRFGKYIDIHFSANGVIEGAKIEQYLLEKSRIVSQNHSERNYHVFYCILAGLSADEKSRLDLGMAADYKYLTGGNSITCEGRDDAAEFSDIRSAMKVLLFSDQEIWEIIKLLAALLHCGNIKYKATVVDNLDATEIPEHINVERVAGLLGLPIQPLIDALTRRTLFAHGETVVSTLSRDQSVDVRDAFVKGIYGRMFVHIVRKINTAIFKPRGTSRNAIGVLDIFGFENFDQNSFEQFCINYANENLQQFFVQHIFKLEQEEYNHEAINWQHIEFVDNQDALDLIAIKQLNIMALIDEEARFPKGTDQTMLAKLHKTHGSHKNYLKPKSDINTSFGLNHFAGVVFYDTRGFLDKNRDTFSPDLLHLVSQSTNKFLRQIFAQDIEMGAETRKRTPTLSTQFRKSLDALMKTLSSCQPFFIRCIKPNELKKPMMFDRGLCCRQLRYSGMMETIRIRRAGYPIRHGFREFVERYRFLIPGVPPAHRTDCQAATSRICAVVLGKSDYQLGHTKVFLKDAHDLFLEQERDRVLTRKILILQRSIRGWVYRRRFLRLRAAAITVQRFWKGYAQRKRYRNMRVGYMRLQALIRSRVLSHRFRHLRGHIVGLQAHARGYLVRREYGHKMWAVIKIQSHVRRMIAMRRYRKLRLEHKQFAEVLQLRKLEEQELLHRGNKHAREIAEQHYRDRLHELERREIQEQLENRRRVEVNMNIINDAARKQEEPVDDGKLVEAMFDFLPDSSSDAPTPHGGRETSVFNDLPHAQNVNQDDIIAPIHISEDEEDLSEFKFQKFAATYFQGNVNHQYAKKALKHPLLPLHTQGDQLAAQALWITILRFTGDMPEPKYHTMDRMDTTSVMSKVTATLGRNFIRSKEFQEAQLMGLDPDAFLKQKPRSIRHKLVSLTLKRKNKLGEDVRRRLQDDEYTADSYQSWLQSRPTSNLEKLHFIIGHGILRAELRDEIYCQICKQLTNNPLKSSHARGWILLSLCVGCFAPSEKFVNYLRAFIREGPPGYAPYCEERLKRTFNNGTRNQPPSWLELQATKSKKPIMLPITFMDGNTKTLLADSATTARELCNQLSDKISLKDQFGFSLYIALFDKVSSLGSGGDHVMDAISQCEQYAKEQGAQERNAPWRLFFRKEIFAPWHEPTHDQVATNLIYQQVVRGVKFGEYRCDKEEDLAMIAAQQYFIEYSTDMSMERLFTLLPNFIPDFCLSGVDKAIERWAALVLQAYKKSYYVKDKIAPLKIKEDIVSYAKYKWPLLFSRFYEAYRNSGPNLPKNDVIIAVNWTGVYVVDDQEQVLLELSFPEITAVSSQKTNKVFTQTFSLSTVRGEEFTFQSPNAEDIRDLVVYFLDGLKKRSKYVIALQDYRAPSDGTSFLSFFKGDLIILEDESCGESVLNNGWCIGRCDRSQERGDFPAETVYVLPTLSKPPQDILALFNIEEAHHGRRLSMASNGGAVEPRDRPHTLMEYALDHFRLPPKRTMSKTLTLSSKRSEELWRYSRDPIKAPLLRKLQSKEEFAEEACFAFAAILKYMGDLPSKRPRMGNEITDHIFDGPLKHEILRDEIYCQLMKQLTDNRNRMSEERGWELMWLATGLFACSQGLLKELLLFLRTRRHPISQDSMHRLQKTIRHGQRKYPPHQVEVEAIQHKTTQIFHKVYFPDDTDEAFEVDSSTRAKDFCNNISQRLSLRTSEGFSLFVKIADKVISVPEGDFFFDFVRHLTDWIKKARPIRDGANPQFTYQVFFMKKLWTNTVPGKDRNADLIFHYHQELPKLLRGYHKCSREEAAKLAALVFRVRFGENKQELQAIPQMLRELIPSDIMKIQSTSEWKRSIVASYNQDGGMTSEDAKVAFLKIVYRWPTFGSAFFEVKQTTEPNYPEMLLIAINKHGVSLIHPVTKDILVTHPFTRISNWSSGNTYFHMTIGNLVRGSKLLCETSLGYKMDDLLTSYISLMLTNMNKNRTIRAN.

The Myosin motor domain maps to 63–733 (QGVEDMISLG…HDLFLEQERD (671 aa)). An ATP-binding site is contributed by 156 to 163 (GESGAGKT). Actin-binding stretches follow at residues 612 to 634 (LDAL…KPNE) and 712 to 726 (QLGH…AHDL). 4 consecutive IQ domains span residues 736–758 (LTRK…RFLR), 759–788 (LRAA…GYMR), 805–827 (LRGH…EYGH), and 828–857 (KMWA…EHKQ). Residues 886-919 (QHYRDRLHELERREIQEQLENRRRVEVNMNIIND) are a coiled coil. The MyTH4 1 domain maps to 1008–1245 (YAKKALKHPL…PSWLELQATK (238 aa)). Residues 1250 to 1560 (IMLPITFMDG…YFLDGLKKRS (311 aa)) form the FERM 1 domain. The 70-residue stretch at 1558 to 1627 (KRSKYVIALQ…PAETVYVLPT (70 aa)) folds into the SH3 domain. 2 positions are modified to phosphoserine: serine 1651 and serine 1654. In terms of domain architecture, MyTH4 2 spans 1701–1849 (YSRDPIKAPL…PHQVEVEAIQ (149 aa)). The FERM 2 domain maps to 1855-2158 (IFHKVYFPDD…SYISLMLTNM (304 aa)). Threonine 2045 is subject to Phosphothreonine.

The protein belongs to the TRAFAC class myosin-kinesin ATPase superfamily. Myosin family. As to quaternary structure, homodimerizes in a two headed molecule through the formation of a coiled-coil rod. Homodimers motility is approximately 8-10 times slower than that of myosin V, and its step size is 30 nm, which is consistent with the presence of five IQ motifs in its neck region. Interacts with Cad99C (via the cytoplasmic domain). Interacts with zip and Sans. As to expression, expressed in the setae, micro- and macrochaetae on the head, thorax and wing.

It localises to the cytoplasm. Its subcellular location is the cell cortex. It is found in the cell projection. The protein localises to the microvillus. Its function is as follows. Myosins are actin-based motor molecules with ATPase activity. Unconventional myosins serve in intracellular movements: can function in cells as a single-molecule cargo transporter. A very slow and high-duty-ratio motor, may be suitable for tension maintenance of actin filaments. Their highly divergent tails are presumed to bind to membranous compartments, which would be moved relative to actin filaments. Plays a key role in the formation of cellular projections and other actin-based functions required for embryonic and larval viability. Necessary for auditory transduction: plays a role in Johnston's organ organization by functioning in scolopidial apical attachment and therefore to acoustic stimulus propagation from the antenna a2/a3 joint to transducing elements. Interaction with the myosin zip may be important for its function in scolopidial apical attachment. During oogenesis it has Cad99c-dependent and Cad99c-independent roles in regulating the shape and spacing of the follicle cell microvilli which secrete eggshell material such as the vitelline membrane. May be required for the normal expression of Cad99c in the follicle cell microvilli. The protein is Myosin-VIIa of Drosophila melanogaster (Fruit fly).